We begin with the raw amino-acid sequence, 673 residues long: UvrABC system protein B (673 aa).

The 158-residue stretch at 26-183 (EGLEDGLAHQ…RRLAELQYAR (158 aa)) folds into the Helicase ATP-binding domain. 39–46 (GVTGSGKT) provides a ligand contact to ATP. Positions 92 to 115 (YYDYYQPEAYVPSSDTFIEKDASV) match the Beta-hairpin motif. Residues 431–597 (QVDDLLSEIR…GLNKKVVDIL (167 aa)) form the Helicase C-terminal domain. The disordered stretch occupies residues 608-627 (AKGRGKSRPIVEPDNVPMDM). Residues 633–668 (QQKIHELEGLMMQHAQNLEFEEAAQIRDQLHLLREL) form the UVR domain.

The protein belongs to the UvrB family. In terms of assembly, forms a heterotetramer with UvrA during the search for lesions. Interacts with UvrC in an incision complex.

The protein localises to the cytoplasm. Its function is as follows. The UvrABC repair system catalyzes the recognition and processing of DNA lesions. A damage recognition complex composed of 2 UvrA and 2 UvrB subunits scans DNA for abnormalities. Upon binding of the UvrA(2)B(2) complex to a putative damaged site, the DNA wraps around one UvrB monomer. DNA wrap is dependent on ATP binding by UvrB and probably causes local melting of the DNA helix, facilitating insertion of UvrB beta-hairpin between the DNA strands. Then UvrB probes one DNA strand for the presence of a lesion. If a lesion is found the UvrA subunits dissociate and the UvrB-DNA preincision complex is formed. This complex is subsequently bound by UvrC and the second UvrB is released. If no lesion is found, the DNA wraps around the other UvrB subunit that will check the other stand for damage. The sequence is that of UvrABC system protein B from Escherichia coli O81 (strain ED1a).